The chain runs to 453 residues: Adenosylmethionine-8-amino-7-oxononanoate aminotransferase (453 aa).

Residue 118 to 119 (GS) participates in pyridoxal 5'-phosphate binding. A substrate-binding site is contributed by Tyr151. Residue Asp258 participates in pyridoxal 5'-phosphate binding. Residues Lys287, Gly322, and Arg417 each contribute to the substrate site. N6-(pyridoxal phosphate)lysine is present on Lys287.

Belongs to the class-III pyridoxal-phosphate-dependent aminotransferase family. BioA subfamily. Homodimer. Pyridoxal 5'-phosphate serves as cofactor.

It is found in the cytoplasm. It catalyses the reaction (8S)-8-amino-7-oxononanoate + S-adenosyl-L-methionine = S-adenosyl-4-methylsulfanyl-2-oxobutanoate + (7R,8S)-7,8-diammoniononanoate. Its pathway is cofactor biosynthesis; biotin biosynthesis; 7,8-diaminononanoate from 8-amino-7-oxononanoate (SAM route): step 1/1. Functionally, catalyzes the transfer of the alpha-amino group from S-adenosyl-L-methionine (SAM) to 7-keto-8-aminopelargonic acid (KAPA) to form 7,8-diaminopelargonic acid (DAPA). It is the only aminotransferase known to utilize SAM as an amino donor. The polypeptide is Adenosylmethionine-8-amino-7-oxononanoate aminotransferase (Geobacter sulfurreducens (strain ATCC 51573 / DSM 12127 / PCA)).